A 145-amino-acid polypeptide reads, in one-letter code: uncharacterized protein (145 aa).

Residues 78 to 145 (KLQIVAKDRI…DVVEKISILW (68 aa)) enclose the ACT domain.

This is an uncharacterized protein from Methanocaldococcus jannaschii (strain ATCC 43067 / DSM 2661 / JAL-1 / JCM 10045 / NBRC 100440) (Methanococcus jannaschii).